The chain runs to 452 residues: Probable glycine dehydrogenase (decarboxylating) subunit 1 (452 aa).

Belongs to the GcvP family. N-terminal subunit subfamily. The glycine cleavage system is composed of four proteins: P, T, L and H. In this organism, the P 'protein' is a heterodimer of two subunits.

The enzyme catalyses N(6)-[(R)-lipoyl]-L-lysyl-[glycine-cleavage complex H protein] + glycine + H(+) = N(6)-[(R)-S(8)-aminomethyldihydrolipoyl]-L-lysyl-[glycine-cleavage complex H protein] + CO2. The glycine cleavage system catalyzes the degradation of glycine. The P protein binds the alpha-amino group of glycine through its pyridoxal phosphate cofactor; CO(2) is released and the remaining methylamine moiety is then transferred to the lipoamide cofactor of the H protein. This is Probable glycine dehydrogenase (decarboxylating) subunit 1 from Sphingopyxis alaskensis (strain DSM 13593 / LMG 18877 / RB2256) (Sphingomonas alaskensis).